Reading from the N-terminus, the 108-residue chain is uncharacterized protein (108 aa).

This is an uncharacterized protein from Rickettsia prowazekii (strain Madrid E).